The chain runs to 348 residues: MTENYAAVLHGANDVRIEKIPVPEINDDEVLIKIDCVGICGSDVKLYSTGTCGADVIDKPIVIGHEGAGTVVKVGDKVSSLRVGDRVAIEPTQPCRSCELCKRGKYNLCVEPRYCSSMGAPGNLCRYYKHVADFCHKLPDNLTMEEGAAVQPLAIVIHACNRAKITLGSKIVILGAGPIGILCAMSAKAMGASKIILTDVVQSRLDAALELGADNVLLVRREYTDEEVVEKIVKLLGDRPDVSIDACGYGSAQRVALLVTKTAGLVLVVGIADKTVELPLSQALLREVDVVGSFRIMNTYQPALAAVSSGAIPLDKFITHRFPLNKTKEALDLAKSGAAMKILIHVQN.

Zn(2+) is bound by residues Cys-40, His-65, and Glu-66. NAD(+) is bound by residues Ile-179, Asp-199, Arg-204, 269–271, and 293–295; these read VGI and SFR. Arg-295 serves as a coordination point for substrate.

The protein belongs to the zinc-containing alcohol dehydrogenase family. Homotetramer. The cofactor is Zn(2+).

It catalyses the reaction xylitol + NAD(+) = D-xylulose + NADH + H(+). The catalysed reaction is L-iditol + NAD(+) = keto-L-sorbose + NADH + H(+). The enzyme catalyses keto-D-fructose + NADH + H(+) = D-sorbitol + NAD(+). In terms of biological role, polyol dehydrogenase that catalyzes the reversible NAD(+)-dependent oxidation of various sugar alcohols. Is active with xylitol, L-iditol and D-sorbitol (D-glucitol) as substrates, leading to the C2-oxidized products D-xylulose, L-sorbose and D-fructose, respectively. Is a key enzyme in the polyol pathway that interconverts glucose and fructose via sorbitol, which constitutes an important alternate route for glucose metabolism. The protein is Sorbitol dehydrogenase (SDH) of Bombyx mori (Silk moth).